Reading from the N-terminus, the 291-residue chain is N-acetylmannosamine kinase (291 aa).

ATP is bound by residues 5 to 12 (AVDIGGTK) and 132 to 139 (GVGGGIVV). Zn(2+) contacts are provided by histidine 156, cysteine 166, cysteine 168, and cysteine 173.

It belongs to the ROK (NagC/XylR) family. NanK subfamily. As to quaternary structure, homodimer.

It carries out the reaction an N-acyl-D-mannosamine + ATP = an N-acyl-D-mannosamine 6-phosphate + ADP + H(+). The protein operates within amino-sugar metabolism; N-acetylneuraminate degradation; D-fructose 6-phosphate from N-acetylneuraminate: step 2/5. Functionally, catalyzes the phosphorylation of N-acetylmannosamine (ManNAc) to ManNAc-6-P. The protein is N-acetylmannosamine kinase (nanK2) of Escherichia coli O6:H1 (strain CFT073 / ATCC 700928 / UPEC).